The sequence spans 201 residues: Peptidyl-tRNA hydrolase (201 aa).

Tyrosine 14 serves as a coordination point for tRNA. The active-site Proton acceptor is the histidine 19. 3 residues coordinate tRNA: tyrosine 64, asparagine 66, and asparagine 113. Residues 178–201 form a disordered region; it reads PGPAMNRFNRKPEPPESGGEVAAK.

Belongs to the PTH family. Monomer.

Its subcellular location is the cytoplasm. It catalyses the reaction an N-acyl-L-alpha-aminoacyl-tRNA + H2O = an N-acyl-L-amino acid + a tRNA + H(+). Hydrolyzes ribosome-free peptidyl-tRNAs (with 1 or more amino acids incorporated), which drop off the ribosome during protein synthesis, or as a result of ribosome stalling. In terms of biological role, catalyzes the release of premature peptidyl moieties from peptidyl-tRNA molecules trapped in stalled 50S ribosomal subunits, and thus maintains levels of free tRNAs and 50S ribosomes. The protein is Peptidyl-tRNA hydrolase of Koribacter versatilis (strain Ellin345).